We begin with the raw amino-acid sequence, 121 residues long: Fluoride-specific ion channel FluC (121 aa).

4 helical membrane-spanning segments follow: residues 5–25 (LLIFLGGGTGSVLRYLLTISI), 33–53 (FPWGTFAVNILGCILIGVFYT), 66–83 (LMLTIGLCGGFTTFSTFS), and 98–118 (FFTYIIGSVVLGILGVMLGIW). The Na(+) site is built by G74 and T77.

This sequence belongs to the fluoride channel Fluc/FEX (TC 1.A.43) family.

It localises to the cell inner membrane. It carries out the reaction fluoride(in) = fluoride(out). Its activity is regulated as follows. Na(+) is not transported, but it plays an essential structural role and its presence is essential for fluoride channel function. Fluoride-specific ion channel. Important for reducing fluoride concentration in the cell, thus reducing its toxicity. This chain is Fluoride-specific ion channel FluC, found in Phocaeicola vulgatus (strain ATCC 8482 / DSM 1447 / JCM 5826 / CCUG 4940 / NBRC 14291 / NCTC 11154) (Bacteroides vulgatus).